The following is a 90-amino-acid chain: uncharacterized protein (90 aa).

Positions 1 to 20 are cleaved as a signal peptide; sequence MEKLFVLVFALTLLAFSSEA. A disordered region spans residues 31 to 50; it reads QLLRSRRQDRPSKPGFPDEP.

It localises to the secreted. This is an uncharacterized protein from Rattus norvegicus (Rat).